Here is a 363-residue protein sequence, read N- to C-terminus: MNYEFERESGFINSQPSLAECLTSFPPVADSFQSSSIKSSTLSRPTLIPPPFEQTIPSLNPGSHPRHGRPRHSPDGCSPLPTASLPPEYPWMREKKASKRNHLPNSTTTTISNGPVCFSPKGSPEIVESAGGGGGGSRRLRTAYTNTQLLELEKEFHFNKYLCRPRRVEIAALLDLTERQVKVWFQNRRMKHKRQTQSKENHNAEGKGPSTEEGIHSDEEDEAPVFDRSGALLERDTCSFQKKSHGSAQQHHNSVSMGFAAAPLNSNDKNLKHFPNPSPTVPGCMSTIGPGSASGPDNSDSPPALDVSIHDFQPFSSDSCLQLSDAASPSLSESLDSPVDISTDSFYFFSESLTTIDLQHLSY.

Disordered stretches follow at residues 30-88 (DSFQ…LPPE), 98-117 (SKRNHLPNSTTTTISNGPVC), 189-220 (RMKHKRQTQSKENHNAEGKGPSTEEGIHSDEE), and 268-308 (DKNL…LDVS). Polar residues predominate over residues 31–44 (SFQSSSIKSSTLSR). The Antp-type hexapeptide motif lies at 88-93 (EYPWMR). The segment covering 103-113 (LPNSTTTTISN) has biased composition (polar residues). Residues 137–196 (SRRLRTAYTNTQLLELEKEFHFNKYLCRPRRVEIAALLDLTERQVKVWFQNRRMKHKRQT) constitute a DNA-binding region (homeobox).

This sequence belongs to the Antp homeobox family. Proboscipedia subfamily.

The protein resides in the nucleus. In terms of biological role, sequence-specific transcription factor which is part of a developmental regulatory system that provides cells with specific positional identities on the anterior-posterior axis. In Takifugu rubripes (Japanese pufferfish), this protein is Homeobox protein Hox-A2a (hoxa2a).